A 495-amino-acid polypeptide reads, in one-letter code: Glycerol kinase (495 aa).

Thr-12 provides a ligand contact to ADP. Residues Thr-12, Thr-13, and Ser-14 each contribute to the ATP site. Residue Thr-12 coordinates sn-glycerol 3-phosphate. Arg-16 lines the ADP pocket. Residues Arg-82, Glu-83, Tyr-134, and Asp-243 each coordinate sn-glycerol 3-phosphate. The glycerol site is built by Arg-82, Glu-83, Tyr-134, Asp-243, and Gln-244. ADP is bound by residues Thr-265 and Gly-308. Residues Thr-265, Gly-308, Gln-312, and Gly-409 each coordinate ATP. ADP is bound by residues Gly-409 and Asn-413.

It belongs to the FGGY kinase family.

The catalysed reaction is glycerol + ATP = sn-glycerol 3-phosphate + ADP + H(+). The protein operates within polyol metabolism; glycerol degradation via glycerol kinase pathway; sn-glycerol 3-phosphate from glycerol: step 1/1. Inhibited by fructose 1,6-bisphosphate (FBP). Its function is as follows. Key enzyme in the regulation of glycerol uptake and metabolism. Catalyzes the phosphorylation of glycerol to yield sn-glycerol 3-phosphate. The sequence is that of Glycerol kinase from Ectopseudomonas mendocina (strain ymp) (Pseudomonas mendocina).